A 396-amino-acid chain; its full sequence is Succinyl-diaminopimelate desuccinylase (396 aa).

A Zn(2+)-binding site is contributed by histidine 74. Aspartate 76 is an active-site residue. Aspartate 107 serves as a coordination point for Zn(2+). Glutamate 142 (proton acceptor) is an active-site residue. Residues glutamate 143, glutamate 171, and histidine 360 each coordinate Zn(2+).

It belongs to the peptidase M20A family. DapE subfamily. Homodimer. Zn(2+) is required as a cofactor. It depends on Co(2+) as a cofactor.

It carries out the reaction N-succinyl-(2S,6S)-2,6-diaminopimelate + H2O = (2S,6S)-2,6-diaminopimelate + succinate. Its pathway is amino-acid biosynthesis; L-lysine biosynthesis via DAP pathway; LL-2,6-diaminopimelate from (S)-tetrahydrodipicolinate (succinylase route): step 3/3. Catalyzes the hydrolysis of N-succinyl-L,L-diaminopimelic acid (SDAP), forming succinate and LL-2,6-diaminopimelate (DAP), an intermediate involved in the bacterial biosynthesis of lysine and meso-diaminopimelic acid, an essential component of bacterial cell walls. The chain is Succinyl-diaminopimelate desuccinylase from Methylobacterium sp. (strain 4-46).